The chain runs to 252 residues: C-type lectin domain family 2 member D3 (252 aa).

The disordered stretch occupies residues methionine 1 to arginine 58. The Cytoplasmic segment spans residues methionine 1–tyrosine 78. The span at glycine 16–glutamine 29 shows a compositional bias: polar residues. Residues serine 30–serine 43 show a composition bias toward low complexity. The helical; Signal-anchor for type II membrane protein transmembrane segment at glycine 79 to valine 99 threads the bilayer. Residues lysine 100–glutamine 252 lie on the Extracellular side of the membrane. In terms of domain architecture, C-type lectin spans tyrosine 137–serine 242. A glycan (N-linked (GlcNAc...) asparagine) is linked at asparagine 150. Cysteines 158 and 241 form a disulfide.

It localises to the cell membrane. Lectin-type cell surface receptor. This chain is C-type lectin domain family 2 member D3 (Clec2d3), found in Rattus norvegicus (Rat).